Reading from the N-terminus, the 324-residue chain is Probable WRKY transcription factor 53 (324 aa).

The disordered stretch occupies residues 93–126 (NPGSVPESPASINGSPRSEEFADGGGSSESHHRQ). Positions 152-220 (GLEGPQDDVF…YRGTHTCSQA (69 aa)) form a DNA-binding region, WRKY.

The protein belongs to the WRKY group III family. As to quaternary structure, interacts with ESR/ESP and UPL5. Binds to WRKY30. Post-translationally, ubiquitinated by UPL5. Ubiquitination leads to its subsequent degradation, thus controlling the timing of leaf senescence.

Its subcellular location is the nucleus. Functionally, transcription factor. Interacts specifically with the W box (5'-(T)TGAC[CT]-3'), a frequently occurring elicitor-responsive cis-acting element. May regulate the early events of leaf senescence. Negatively regulates the expression of ESR/ESP. Together with WRKY46 and WRKY70, promotes resistance to P.syringae, probably by enhancing salicylic acid (SA)- dependent genes. Contributes to the suppression of jasmonic acid (MeJA)-induced expression of PDF1.2. This chain is Probable WRKY transcription factor 53, found in Arabidopsis thaliana (Mouse-ear cress).